Consider the following 604-residue polypeptide: Glucoamylase 1 (604 aa).

The signal sequence occupies residues 1-25 (MQLFNLPLKVSFFLVLSYFSLLVSA). Residues 26–115 (ASIPSSASVQ…EFYIKYEVSG (90 aa)) form an adsorption to raw starch region. In terms of domain architecture, CBM21 spans 26-130 (ASIPSSASVQ…NNNSANYQVS (105 aa)). Residues 116–604 (KTYYDNNNSA…SYAKAGAPAA (489 aa)) are starch degradation. Asn122 is a glycosylation site (N-linked (GlcNAc...) asparagine). The interval 127 to 164 (YQVSTSKPTTTTATATTTTAPSTSTTTPPSRSEPATFP) is disordered. Positions 130 to 162 (STSKPTTTTATATTTTAPSTSTTTPPSRSEPAT) are enriched in low complexity. N-linked (GlcNAc...) asparagine glycosylation is found at Asn167, Asn230, and Asn236. Trp279 contributes to the substrate binding site. Asp336 functions as the Proton acceptor in the catalytic mechanism. Glu339 acts as the Proton donor in catalysis. N-linked (GlcNAc...) asparagine glycosylation is present at Asn564.

Belongs to the glycosyl hydrolase 15 family.

It carries out the reaction Hydrolysis of terminal (1-&gt;4)-linked alpha-D-glucose residues successively from non-reducing ends of the chains with release of beta-D-glucose.. The protein is Glucoamylase 1 of Rhizopus oryzae (Mucormycosis agent).